Here is a 404-residue protein sequence, read N- to C-terminus: Lupus La protein homolog (404 aa).

Positions N7–E99 constitute an HTH La-type RNA-binding domain. Phosphoserine is present on residues S92 and S94. Residues R111–D187 form the RRM domain. The residue at position 116 (K116) is an N6-acetyllysine. At T120 the chain carries Phosphothreonine. N6-acetyllysine is present on K128. A Phosphoserine modification is found at S225. The region spanning E227–A348 is the xRRM domain. An N6-acetyllysine mark is found at K328 and K341. Residues W329–G342 are compositionally biased toward basic residues. A disordered region spans residues W329–Q404. Positions N343–K354 are enriched in low complexity. K360 is subject to N6-acetyllysine. Residue T362 is modified to Phosphothreonine. S366 is modified (phosphoserine). Residues R381–P391 are compositionally biased toward basic and acidic residues.

As to quaternary structure, interacts with DDX15. May interact with RUFY1. Phosphorylated in the C-terminal part of the protein.

The protein resides in the nucleus. Its function is as follows. Binds to the 3' poly(U) terminus of nascent RNA polymerase III transcripts, protecting them from exonuclease digestion and facilitating their folding and maturation. The polypeptide is Lupus La protein homolog (SSB) (Bos taurus (Bovine)).